Reading from the N-terminus, the 463-residue chain is Glutathione amide reductase (463 aa).

Ni(2+) is bound by residues threonine 2, glutamine 3, and histidine 4. Residues 14–15, glutamate 34, and threonine 41 contribute to the FAD site; that span reads SG. An intrachain disulfide couples cysteine 42 to cysteine 47. FAD-binding positions include lysine 50 and 113 to 114; that span reads HA. NAD(+) is bound at residue lysine 50. NAD(+)-binding positions include 174-180, 197-198, valine 230, and glycine 261; these read AGYIGIE and LE. FAD contacts are provided by residues aspartate 302 and 308–310; that span reads QLT. NAD(+)-binding residues include glutamine 308 and valine 341. Position 437 (histidine 437) interacts with FAD. Histidine 437 serves as the catalytic Proton acceptor.

Belongs to the class-I pyridine nucleotide-disulfide oxidoreductase family. As to quaternary structure, homodimer. Requires FAD as cofactor.

It carries out the reaction 2 glutathione amide + NAD(+) = glutathione amide disulfide + NADH + H(+). Catalyzes the reduction of glutathione amide disulfide (GASSAG) to restore glutathione amide (GASH) in the presence of NADH. May play a role in GASH metabolism under anaerobic conditions as a sulfide carrier necessary for cytoplasmic sulfide oxidation. In Marichromatium gracile (Chromatium gracile), this protein is Glutathione amide reductase.